The chain runs to 260 residues: tRNA pseudouridine synthase A (260 aa).

Catalysis depends on Asp-52, which acts as the Nucleophile. Tyr-111 is a binding site for substrate.

It belongs to the tRNA pseudouridine synthase TruA family. As to quaternary structure, homodimer.

It catalyses the reaction uridine(38/39/40) in tRNA = pseudouridine(38/39/40) in tRNA. Functionally, formation of pseudouridine at positions 38, 39 and 40 in the anticodon stem and loop of transfer RNAs. The polypeptide is tRNA pseudouridine synthase A (Roseobacter denitrificans (strain ATCC 33942 / OCh 114) (Erythrobacter sp. (strain OCh 114))).